Consider the following 404-residue polypeptide: Dual-specificity RNA methyltransferase RlmN (404 aa).

Glutamate 118 acts as the Proton acceptor in catalysis. Positions 125–357 (VGRAGALCVS…NKAGYSSPIR (233 aa)) constitute a Radical SAM core domain. The cysteines at positions 132 and 368 are disulfide-linked. [4Fe-4S] cluster is bound by residues cysteine 139, cysteine 143, and cysteine 146. S-adenosyl-L-methionine contacts are provided by residues 194–195 (GE), serine 226, 248–250 (SLH), and asparagine 325. Residue cysteine 368 is the S-methylcysteine intermediate of the active site.

This sequence belongs to the radical SAM superfamily. RlmN family. Requires [4Fe-4S] cluster as cofactor.

The protein resides in the cytoplasm. The enzyme catalyses adenosine(2503) in 23S rRNA + 2 reduced [2Fe-2S]-[ferredoxin] + 2 S-adenosyl-L-methionine = 2-methyladenosine(2503) in 23S rRNA + 5'-deoxyadenosine + L-methionine + 2 oxidized [2Fe-2S]-[ferredoxin] + S-adenosyl-L-homocysteine. It catalyses the reaction adenosine(37) in tRNA + 2 reduced [2Fe-2S]-[ferredoxin] + 2 S-adenosyl-L-methionine = 2-methyladenosine(37) in tRNA + 5'-deoxyadenosine + L-methionine + 2 oxidized [2Fe-2S]-[ferredoxin] + S-adenosyl-L-homocysteine. Specifically methylates position 2 of adenine 2503 in 23S rRNA and position 2 of adenine 37 in tRNAs. m2A2503 modification seems to play a crucial role in the proofreading step occurring at the peptidyl transferase center and thus would serve to optimize ribosomal fidelity. This Caulobacter vibrioides (strain ATCC 19089 / CIP 103742 / CB 15) (Caulobacter crescentus) protein is Dual-specificity RNA methyltransferase RlmN.